Reading from the N-terminus, the 311-residue chain is MGTGNDTTVVEFTLLGLSEDTTVCAILFLVFLGIYVVTLMGNISIIVLIRRSHHLHTPMYIFLCHLAFVDIGYSSSVTPVMLMSFLRKETSLPVAGCVAQLCSVVTFGTAECFLLAAMAYDRYVAICSPLLYSTCMSPGVCIILVGMSYLGGCVNAWTFIGCLLRLSFCGPNKVNHFFCDYSPLLKLACSHDFTFEIIPAISSGSIIVATVCVIAISYIYILITILKMHSTKGRHKAFSTCTSHLTAVTLFYGTITFIYVMPKSSYSTDQNKVVSVFYTVVIPMLNPLIYSLRNKEIKGALKRELRIKIFS.

The Extracellular segment spans residues 1–25 (MGTGNDTTVVEFTLLGLSEDTTVCA). Asparagine 5 carries an N-linked (GlcNAc...) asparagine glycan. The helical transmembrane segment at 26 to 46 (ILFLVFLGIYVVTLMGNISII) threads the bilayer. At 47–54 (VLIRRSHH) the chain is on the cytoplasmic side. A helical membrane pass occupies residues 55-75 (LHTPMYIFLCHLAFVDIGYSS). The Extracellular portion of the chain corresponds to 76–99 (SVTPVMLMSFLRKETSLPVAGCVA). Cysteines 97 and 189 form a disulfide. The helical transmembrane segment at 100–120 (QLCSVVTFGTAECFLLAAMAY) threads the bilayer. The Cytoplasmic portion of the chain corresponds to 121-139 (DRYVAICSPLLYSTCMSPG). The chain crosses the membrane as a helical span at residues 140-160 (VCIILVGMSYLGGCVNAWTFI). Residues 161 to 196 (GCLLRLSFCGPNKVNHFFCDYSPLLKLACSHDFTFE) lie on the Extracellular side of the membrane. The chain crosses the membrane as a helical span at residues 197-217 (IIPAISSGSIIVATVCVIAIS). Over 218–237 (YIYILITILKMHSTKGRHKA) the chain is Cytoplasmic. A helical membrane pass occupies residues 238–258 (FSTCTSHLTAVTLFYGTITFI). At 259–271 (YVMPKSSYSTDQN) the chain is on the extracellular side. The helical transmembrane segment at 272-292 (KVVSVFYTVVIPMLNPLIYSL) threads the bilayer. Residues 293-311 (RNKEIKGALKRELRIKIFS) are Cytoplasmic-facing.

This sequence belongs to the G-protein coupled receptor 1 family. Expressed in the tongue.

It localises to the cell membrane. Functionally, odorant receptor (Potential). May be involved in taste perception. The protein is Olfactory receptor 5P3 (OR5P3) of Homo sapiens (Human).